We begin with the raw amino-acid sequence, 239 residues long: Purine nucleoside phosphorylase DeoD-type (239 aa).

His5 serves as a coordination point for a purine D-ribonucleoside. Residues Gly21, Arg25, Arg44, and 88–91 (RVGS) each bind phosphate. A purine D-ribonucleoside is bound by residues 180-182 (EME) and 204-205 (SD). The active-site Proton donor is the Asp205.

It belongs to the PNP/UDP phosphorylase family. As to quaternary structure, homohexamer; trimer of homodimers.

The enzyme catalyses a purine D-ribonucleoside + phosphate = a purine nucleobase + alpha-D-ribose 1-phosphate. It carries out the reaction a purine 2'-deoxy-D-ribonucleoside + phosphate = a purine nucleobase + 2-deoxy-alpha-D-ribose 1-phosphate. Functionally, catalyzes the reversible phosphorolytic breakdown of the N-glycosidic bond in the beta-(deoxy)ribonucleoside molecules, with the formation of the corresponding free purine bases and pentose-1-phosphate. This Salmonella arizonae (strain ATCC BAA-731 / CDC346-86 / RSK2980) protein is Purine nucleoside phosphorylase DeoD-type.